The sequence spans 341 residues: Methionine import ATP-binding protein MetN (341 aa).

Residues 9-247 (ISVQDVSKKL…SENSITNELF (239 aa)) enclose the ABC transporter domain. Position 41-48 (41-48 (GHSGSGKT)) interacts with ATP.

It belongs to the ABC transporter superfamily. Methionine importer (TC 3.A.1.24) family. In terms of assembly, the complex is composed of two ATP-binding proteins (MetN), two transmembrane proteins (MetI) and a solute-binding protein (MetQ).

It localises to the cell inner membrane. The catalysed reaction is L-methionine(out) + ATP + H2O = L-methionine(in) + ADP + phosphate + H(+). It carries out the reaction D-methionine(out) + ATP + H2O = D-methionine(in) + ADP + phosphate + H(+). Its function is as follows. Part of the ABC transporter complex MetNIQ involved in methionine import. Responsible for energy coupling to the transport system. This is Methionine import ATP-binding protein MetN from Chlamydia pneumoniae (Chlamydophila pneumoniae).